We begin with the raw amino-acid sequence, 424 residues long: Tubulin-specific chaperone cofactor E-like protein (424 aa).

Phosphoserine occurs at positions 18 and 41. LRR repeat units follow at residues 73–98, 99–123, 124–147, 150–172, 173–197, 199–224, and 226–250; these read CAHV…IVSN, VPQL…TCAG, SFSG…HTIL, LPDL…PSVC, CHSL…KLGV, FPSL…SLAR, and FPNL…KLNS. In terms of domain architecture, LRRCT spans 262–303; that stretch reads IPLLQPYTTEERRKLVVARLPSVSKLNGSVVTDGEREDSERF. The 91-residue stretch at 334-424 folds into the Ubiquitin-like domain; it reads AEVDLRPQSS…DKIFVESKTK (91 aa). A coiled-coil region spans residues 350–375; sequence FNDQVEEVSIRLDQTVAELKRQLKTL.

The protein localises to the cytoplasm. It is found in the cytoskeleton. Functionally, acts as a regulator of tubulin stability. The chain is Tubulin-specific chaperone cofactor E-like protein (Tbcel) from Rattus norvegicus (Rat).